The following is a 223-amino-acid chain: Ethylene-inducing xylanase 1 (223 aa).

An N-terminal signal peptide occupies residues Met1–Thr19. Residues Lys34 to Ser223 enclose the GH11 domain. Residue Glu119 is the Nucleophile of the active site. The tract at residues Arg174 to Asn184 is nuclear localization signal. The Proton donor role is filled by Glu210.

This sequence belongs to the glycosyl hydrolase 11 (cellulase G) family.

Its subcellular location is the secreted. It is found in the host nucleus. The catalysed reaction is Endohydrolysis of (1-&gt;4)-beta-D-xylosidic linkages in xylans.. It functions in the pathway glycan degradation; xylan degradation. Its function is as follows. Endo-1,4-beta-xylanase involved in the hydrolysis of xylan, a major structural heterogeneous polysaccharide found in plant biomass representing the second most abundant polysaccharide in the biosphere, after cellulose. Acts as an effector that localizes to the host nucleus to contribute to the virulence process. Induces host innate immunity responses; triggers BAK1-and SOBIR1-dependent cell death, salicylic acid signaling and jasmonic acid signaling. Does not exhibit any cell death when transiently expressed in N.benthamiana. The protein is Ethylene-inducing xylanase 1 of Verticillium dahliae (strain VdLs.17 / ATCC MYA-4575 / FGSC 10137) (Verticillium wilt).